The chain runs to 317 residues: Acetyl-coenzyme A carboxylase carboxyl transferase subunit alpha (317 aa).

The CoA carboxyltransferase C-terminal domain maps to Arg-37–Asp-292.

Belongs to the AccA family. As to quaternary structure, acetyl-CoA carboxylase is a heterohexamer composed of biotin carboxyl carrier protein (AccB), biotin carboxylase (AccC) and two subunits each of ACCase subunit alpha (AccA) and ACCase subunit beta (AccD).

The protein resides in the cytoplasm. It carries out the reaction N(6)-carboxybiotinyl-L-lysyl-[protein] + acetyl-CoA = N(6)-biotinyl-L-lysyl-[protein] + malonyl-CoA. It participates in lipid metabolism; malonyl-CoA biosynthesis; malonyl-CoA from acetyl-CoA: step 1/1. Functionally, component of the acetyl coenzyme A carboxylase (ACC) complex. First, biotin carboxylase catalyzes the carboxylation of biotin on its carrier protein (BCCP) and then the CO(2) group is transferred by the carboxyltransferase to acetyl-CoA to form malonyl-CoA. The sequence is that of Acetyl-coenzyme A carboxylase carboxyl transferase subunit alpha from Syntrophotalea carbinolica (strain DSM 2380 / NBRC 103641 / GraBd1) (Pelobacter carbinolicus).